Consider the following 94-residue polypeptide: MKISKEQVATIARLARLDLDEARLERFAGQFGDILDYMDMLGAVDTTDVEPLYSPSEHGTVLRADEVHTHCTREELLANAPESDGQFFVVPRIV.

It belongs to the GatC family. Heterotrimer of A, B and C subunits.

The catalysed reaction is L-glutamyl-tRNA(Gln) + L-glutamine + ATP + H2O = L-glutaminyl-tRNA(Gln) + L-glutamate + ADP + phosphate + H(+). The enzyme catalyses L-aspartyl-tRNA(Asn) + L-glutamine + ATP + H2O = L-asparaginyl-tRNA(Asn) + L-glutamate + ADP + phosphate + 2 H(+). Allows the formation of correctly charged Asn-tRNA(Asn) or Gln-tRNA(Gln) through the transamidation of misacylated Asp-tRNA(Asn) or Glu-tRNA(Gln) in organisms which lack either or both of asparaginyl-tRNA or glutaminyl-tRNA synthetases. The reaction takes place in the presence of glutamine and ATP through an activated phospho-Asp-tRNA(Asn) or phospho-Glu-tRNA(Gln). The protein is Aspartyl/glutamyl-tRNA(Asn/Gln) amidotransferase subunit C of Nitratidesulfovibrio vulgaris (strain ATCC 29579 / DSM 644 / CCUG 34227 / NCIMB 8303 / VKM B-1760 / Hildenborough) (Desulfovibrio vulgaris).